The sequence spans 481 residues: Solute carrier family 46 member 2 (481 aa).

The Cytoplasmic portion of the chain corresponds to 1–37 (MGPEAAGPGRGAAPRLQVRTWIEPVVAATQVASSLYE). Residues 38–58 (AGLLLVVKASFGAGAGAGAGA) form a helical membrane-spanning segment. Topologically, residues 59–83 (ASNHSAGPPRGAPEDQQQRAISNFY) are extracellular. Asn-61 is a glycosylation site (N-linked (GlcNAc...) asparagine). Residues 84 to 104 (IVYNLVVGLTPLLSAYALGWL) form a helical membrane-spanning segment. At 105–113 (SDRRHRKVA) the chain is on the cytoplasmic side. Residues 114–134 (ICVALLGFLLSRVGLLLKVLL) traverse the membrane as a helical segment. The Extracellular segment spans residues 135-143 (DWPVEVLYG). Residues 144-164 (AAALNGLCGGFSAFWAGVMAL) traverse the membrane as a helical segment. The Cytoplasmic segment spans residues 165-179 (GSLGSSEGRRSVRLV). A helical transmembrane segment spans residues 180-200 (LIDLILGLAGFCGSMASGHLF). Residues 201 to 210 (KQVAGHSGQG) are Extracellular-facing. Residues 211–231 (LVLTACSVSCATFALLYSLLV) form a helical membrane-spanning segment. Topologically, residues 232 to 286 (LKVPEAAAGSGQALSAGDSVAGTVGTYRTLDPDHSDKQSVQGLHPPSPGKAKPRR) are cytoplasmic. The disordered stretch occupies residues 263–282 (PDHSDKQSVQGLHPPSPGKA). The helical transmembrane segment at 287–307 (TIIALLFLGAIVYDLAVVGTV) threads the bilayer. Residues 308–326 (DVMPLFVLREPLSWNQVQV) lie on the Extracellular side of the membrane. The helical transmembrane segment at 327 to 347 (GYGMAAGYTIFITSFLGVLVF) threads the bilayer. The Cytoplasmic segment spans residues 348–353 (SRCFQD). A helical membrane pass occupies residues 354–374 (TTMIMIGMVSFGSGALLLAFV). Residues 375–376 (KE) lie on the Extracellular side of the membrane. The chain crosses the membrane as a helical span at residues 377–397 (TYMFYIARAVMLFALIPITTI). Residues 398-412 (RSAMSKLIKGSSYGK) are Cytoplasmic-facing. A helical membrane pass occupies residues 413 to 433 (VFVILQLSLTLTGVVTSTVYN). The Extracellular segment spans residues 434 to 446 (KIYQVTMEKFIGT). Residues 447-467 (CFALSSFLSFLAIIPIGIVAY) form a helical membrane-spanning segment. Residues 468–481 (KQASWLQYGDVRET) are Cytoplasmic-facing.

It belongs to the major facilitator superfamily. SLC46A family. Glycosylated. As to expression, highly expressed by the epididymal duct epithelium.

The protein resides in the endosome membrane. It localises to the cell membrane. The catalysed reaction is N-acetyl-beta-D-glucosaminyl-(1-&gt;4)-1,6-anhydro-N-acetyl-beta-D-muramoyl-L-alanyl-gamma-D-glutamyl-meso-2,6-diaminopimeloyl-D-alanine(out) + n H(+)(out) = N-acetyl-beta-D-glucosaminyl-(1-&gt;4)-1,6-anhydro-N-acetyl-beta-D-muramoyl-L-alanyl-gamma-D-glutamyl-meso-2,6-diaminopimeloyl-D-alanine(in) + n H(+)(in). It carries out the reaction L-alanyl-gamma-D-glutamyl-meso-2,6-diaminopimelate(out) + n H(+)(out) = L-alanyl-gamma-D-glutamyl-meso-2,6-diaminopimelate(in) + n H(+)(in). It catalyses the reaction N-acetyl-D-muramoyl-L-alanyl-D-isoglutamine(out) + n H(+)(out) = N-acetyl-D-muramoyl-L-alanyl-D-isoglutamine(in) + n H(+)(in). The enzyme catalyses 2',3'-cGAMP(out) + n H(+)(out) = 2',3'-cGAMP(in) + n H(+)(in). The catalysed reaction is 3',3'-cGAMP(out) + n H(+)(out) = 3',3'-cGAMP(in) + n H(+)(in). Functionally, proton-coupled transporter that delivers pathogen-associated or danger-associated molecular patterns to cytosolic pattern recognition receptors as part of the innate immune response to microbes or tissue injury. Has selectivity toward muropeptides that contain the amino acid diaminopimelic acid (DAP-type peptidoglycan muropeptides) including Tri-DAP and tracheal toxin (TCT), common in Gram-negative bacteria and Gram-positive bacilli. In the context of immune recognition of skin microbiota, shuttles bacterial muropeptides across the endolysosomal membranes into the cytosol for recognition by NOD1, triggering MYD88-dependent secretion of IL1A and neutrophil recruitment in a pyroptosis-type inflammatory process. To a lesser extent and redundantly, transports muramyl dipeptides derived from most bacterial proteoglycans, eliciting NOD2 receptor activation and downstream inflammatory responses. Postulated to function as an importer of cyclic GMP-AMP dinucleotides (cGAMPs) in monocyte and macrophage cell lineages. Selectively imports cGAMPs derived from pathogenic bacteria such as 3'3'-cGAMP thus providing for differential immune recognition of pathogenic versus commensal bacteria. During tumorigenesis may transport extracellular tumor-derived 2'3'-cGAMP across the plasma membrane of M1-polarized macrophages to activate the anti-tumoral stimulator of interferon genes (STING) pathway. The transport mechanism, its electrogenicity and stoichiometry remain to be elucidated. In Canis lupus familiaris (Dog), this protein is Solute carrier family 46 member 2.